Consider the following 299-residue polypeptide: Oxygen-dependent coproporphyrinogen-III oxidase (299 aa).

Serine 92 contacts substrate. Histidine 96 and histidine 106 together coordinate a divalent metal cation. The Proton donor role is filled by histidine 106. 108 to 110 (NVR) contacts substrate. Residues histidine 145 and histidine 175 each coordinate a divalent metal cation. The interval 240 to 275 (YVEFNLVWDRGTLFGLQTGGRTESILMSMPPLVRWE) is important for dimerization. 258 to 260 (GGR) serves as a coordination point for substrate.

The protein belongs to the aerobic coproporphyrinogen-III oxidase family. Homodimer. A divalent metal cation is required as a cofactor.

The protein resides in the cytoplasm. The enzyme catalyses coproporphyrinogen III + O2 + 2 H(+) = protoporphyrinogen IX + 2 CO2 + 2 H2O. It participates in porphyrin-containing compound metabolism; protoporphyrin-IX biosynthesis; protoporphyrinogen-IX from coproporphyrinogen-III (O2 route): step 1/1. Involved in the heme biosynthesis. Catalyzes the aerobic oxidative decarboxylation of propionate groups of rings A and B of coproporphyrinogen-III to yield the vinyl groups in protoporphyrinogen-IX. The protein is Oxygen-dependent coproporphyrinogen-III oxidase of Klebsiella pneumoniae subsp. pneumoniae (strain ATCC 700721 / MGH 78578).